The sequence spans 352 residues: Pyrimidine monooxygenase RutA (352 aa).

Residues 49 to 50, Asn115, Glu124, 140 to 141, and Ser189 contribute to the FMN site; these read IK and RY.

Belongs to the NtaA/SnaA/DszA monooxygenase family. RutA subfamily.

The enzyme catalyses uracil + FMNH2 + NADH + O2 = (Z)-3-ureidoacrylate + FMN + NAD(+) + H2O + H(+). It catalyses the reaction thymine + FMNH2 + NADH + O2 = (Z)-2-methylureidoacrylate + FMN + NAD(+) + H2O + H(+). Its function is as follows. Catalyzes the pyrimidine ring opening between N-3 and C-4 by an unusual flavin hydroperoxide-catalyzed mechanism, adding oxygen atoms in the process to yield ureidoacrylate peracid, that immediately reacts with FMN forming ureidoacrylate and FMN-N(5)-oxide. The FMN-N(5)-oxide reacts spontaneously with NADH to produce FMN. Requires the flavin reductase RutF to regenerate FMN in vivo. This chain is Pyrimidine monooxygenase RutA, found in Caulobacter segnis (strain ATCC 21756 / DSM 7131 / JCM 7823 / NBRC 15250 / LMG 17158 / TK0059) (Mycoplana segnis).